The primary structure comprises 126 residues: Large ribosomal subunit protein bL12 (126 aa).

This sequence belongs to the bacterial ribosomal protein bL12 family. In terms of assembly, homodimer. Part of the ribosomal stalk of the 50S ribosomal subunit. Forms a multimeric L10(L12)X complex, where L10 forms an elongated spine to which 2 to 4 L12 dimers bind in a sequential fashion. Binds GTP-bound translation factors.

Functionally, forms part of the ribosomal stalk which helps the ribosome interact with GTP-bound translation factors. Is thus essential for accurate translation. This Citrifermentans bemidjiense (strain ATCC BAA-1014 / DSM 16622 / JCM 12645 / Bem) (Geobacter bemidjiensis) protein is Large ribosomal subunit protein bL12.